The sequence spans 418 residues: Translation initiation factor 2 subunit gamma (418 aa).

In terms of domain architecture, tr-type G spans 7 to 206 (QPEVNIGVVG…GIQKYIPTPQ (200 aa)). Positions 16–23 (GHVDHGKT) are G1. Mg(2+)-binding residues include Asp-19, Thr-23, Gly-44, and Thr-46. 19–24 (DHGKTT) provides a ligand contact to GTP. The segment at 44–48 (GMTIK) is G2. Zn(2+) contacts are provided by Cys-59, Cys-62, Cys-74, and Cys-77. The G3 stretch occupies residues 93 to 96 (DAPG). GTP contacts are provided by residues 149–152 (NKVD) and 184–186 (SAL). Residues 149-152 (NKVD) are G4. A G5 region spans residues 184–186 (SAL).

The protein belongs to the TRAFAC class translation factor GTPase superfamily. Classic translation factor GTPase family. EIF2G subfamily. In terms of assembly, heterotrimer composed of an alpha, a beta and a gamma chain. It depends on Mg(2+) as a cofactor.

It catalyses the reaction GTP + H2O = GDP + phosphate + H(+). EIF-2 functions in the early steps of protein synthesis by forming a ternary complex with GTP and initiator tRNA. The sequence is that of Translation initiation factor 2 subunit gamma from Sulfurisphaera tokodaii (strain DSM 16993 / JCM 10545 / NBRC 100140 / 7) (Sulfolobus tokodaii).